Reading from the N-terminus, the 284-residue chain is Bifunctional protein FolD 2 (284 aa).

Residues 165 to 167, Thr-192, and Val-233 each bind NADP(+); that span reads GRG.

It belongs to the tetrahydrofolate dehydrogenase/cyclohydrolase family. As to quaternary structure, homodimer.

It carries out the reaction (6R)-5,10-methylene-5,6,7,8-tetrahydrofolate + NADP(+) = (6R)-5,10-methenyltetrahydrofolate + NADPH. The catalysed reaction is (6R)-5,10-methenyltetrahydrofolate + H2O = (6R)-10-formyltetrahydrofolate + H(+). It participates in one-carbon metabolism; tetrahydrofolate interconversion. Catalyzes the oxidation of 5,10-methylenetetrahydrofolate to 5,10-methenyltetrahydrofolate and then the hydrolysis of 5,10-methenyltetrahydrofolate to 10-formyltetrahydrofolate. The protein is Bifunctional protein FolD 2 of Streptomyces avermitilis (strain ATCC 31267 / DSM 46492 / JCM 5070 / NBRC 14893 / NCIMB 12804 / NRRL 8165 / MA-4680).